Reading from the N-terminus, the 176-residue chain is KxDL motif-containing protein 1 (176 aa).

N-acetylmethionine is present on Met-1. The interval 95–176 is disordered; sequence HPEAFSHIPE…HTDDEEMPGE (82 aa). The span at 119 to 131 shows a compositional bias: low complexity; that stretch reads STTTTIATSEQST. Residues 132-145 show a composition bias toward polar residues; that stretch reads GSCDTSPDTVSPSL.

This sequence belongs to the KXD1 family. As to quaternary structure, component of the BLOC-one-related complex (BORC) which is composed of BLOC1S1, BLOC1S2, BORCS5, BORCS6, BORCS7, BORCS8, KXD1 and SNAPIN. Associates with the BLOC-1 complex. Interacts with BLOC1S1. Interacts with DTNBP1/BLOC1S7 (via coiled-coil domain).

It is found in the lysosome membrane. Its function is as follows. As part of the BORC complex may play a role in lysosomes movement and localization at the cell periphery. Associated with the cytosolic face of lysosomes, the BORC complex may recruit ARL8B and couple lysosomes to microtubule plus-end-directed kinesin motor. May also be involved in the biogenesis of lysosome-related organelles such as melanosomes. The protein is KxDL motif-containing protein 1 (KXD1) of Bos taurus (Bovine).